Reading from the N-terminus, the 406-residue chain is Nicotinate phosphoribosyltransferase (406 aa).

Histidine 227 carries the post-translational modification Phosphohistidine; by autocatalysis.

It belongs to the NAPRTase family. Transiently phosphorylated on a His residue during the reaction cycle. Phosphorylation strongly increases the affinity for substrates and increases the rate of nicotinate D-ribonucleotide production. Dephosphorylation regenerates the low-affinity form of the enzyme, leading to product release.

It catalyses the reaction nicotinate + 5-phospho-alpha-D-ribose 1-diphosphate + ATP + H2O = nicotinate beta-D-ribonucleotide + ADP + phosphate + diphosphate. It functions in the pathway cofactor biosynthesis; NAD(+) biosynthesis; nicotinate D-ribonucleotide from nicotinate: step 1/1. Catalyzes the synthesis of beta-nicotinate D-ribonucleotide from nicotinate and 5-phospho-D-ribose 1-phosphate at the expense of ATP. The sequence is that of Nicotinate phosphoribosyltransferase from Methanosarcina mazei (strain ATCC BAA-159 / DSM 3647 / Goe1 / Go1 / JCM 11833 / OCM 88) (Methanosarcina frisia).